Reading from the N-terminus, the 274-residue chain is Phloretin hydrolase (274 aa).

H123, E154, H251, and E255 together coordinate Zn(2+).

The protein belongs to the DAPG/phloretin hydrolase family. Homodimer. It depends on Zn(2+) as a cofactor.

It is found in the cytoplasm. The catalysed reaction is phloretin + H2O = phloretate + 1,3,5-trihydroxybenzene + H(+). Catalyzes the hydrolytic C-C cleavage of phloretin to phloroglucinol and 3-(4-hydroxyphenyl)propionic acid during flavonoid degradation. Also hydrolyzes other C-acylated phenols. This Eubacterium ramulus protein is Phloretin hydrolase (phy).